Reading from the N-terminus, the 311-residue chain is uncharacterized protein (311 aa).

This sequence belongs to the peptidase C1 family.

This is an uncharacterized protein from Acanthamoeba polyphaga mimivirus (APMV).